A 359-amino-acid polypeptide reads, in one-letter code: Bergaptol O-methyltransferase (359 aa).

Residue His-126 coordinates bergaptol. S-adenosyl-L-homocysteine contacts are provided by Ser-179, Gly-203, Asp-226, Asp-246, and Lys-260. Position 264 (His-264) interacts with bergaptol. Residue His-264 is the Proton acceptor of the active site.

This sequence belongs to the class I-like SAM-binding methyltransferase superfamily. Cation-independent O-methyltransferase family. COMT subfamily. In terms of assembly, homodimer. In terms of tissue distribution, mostly expressed in roots and, to a lower extent, in stems and leaves.

The protein localises to the cytoplasm. It carries out the reaction bergaptol + S-adenosyl-L-methionine = bergapten + S-adenosyl-L-homocysteine. Its pathway is aromatic compound metabolism. It functions in the pathway secondary metabolite biosynthesis. Its function is as follows. O-methyltransferase involved in the biosynthesis of furocoumarins natural products such as bergapten, a photosensitizer used for medical purpose such as treating psoriasis and vitiligo or facilitating resistance to microbial infection and other stresses. Catalyzes specifically the methylation of bergaptol. Not active on xanthotol, isoscopoletin, scopoletin and esculetin. The protein is Bergaptol O-methyltransferase of Kitagawia praeruptora (Peucedanum praeruptorum).